Here is a 755-residue protein sequence, read N- to C-terminus: Tryptophan 2-monooxygenase (755 aa).

S247, E267, K275, and R295 together coordinate FMN. R295 contacts substrate.

It belongs to the tryptophan 2-monooxygenase family. FMN is required as a cofactor.

The enzyme catalyses L-tryptophan + O2 = indole-3-acetamide + CO2 + H2O. Its pathway is plant hormone metabolism; auxin biosynthesis. The polypeptide is Tryptophan 2-monooxygenase (iaaM) (Agrobacterium vitis (Rhizobium vitis)).